The chain runs to 85 residues: Large ribosomal subunit protein bL27 (85 aa).

A disordered region spans residues 1 to 21 (MAHKKAGGSTRNGRDSNAQRL). Over residues 9–19 (STRNGRDSNAQ) the composition is skewed to polar residues.

This sequence belongs to the bacterial ribosomal protein bL27 family.

In Pectobacterium carotovorum subsp. carotovorum (strain PC1), this protein is Large ribosomal subunit protein bL27.